Here is a 352-residue protein sequence, read N- to C-terminus: Phosphoribosylformylglycinamidine cyclo-ligase (352 aa).

Belongs to the AIR synthase family.

Its subcellular location is the cytoplasm. The enzyme catalyses 2-formamido-N(1)-(5-O-phospho-beta-D-ribosyl)acetamidine + ATP = 5-amino-1-(5-phospho-beta-D-ribosyl)imidazole + ADP + phosphate + H(+). It participates in purine metabolism; IMP biosynthesis via de novo pathway; 5-amino-1-(5-phospho-D-ribosyl)imidazole from N(2)-formyl-N(1)-(5-phospho-D-ribosyl)glycinamide: step 2/2. The chain is Phosphoribosylformylglycinamidine cyclo-ligase from Pseudomonas entomophila (strain L48).